Reading from the N-terminus, the 159-residue chain is Ribosomal RNA large subunit methyltransferase H (159 aa).

S-adenosyl-L-methionine-binding positions include Leu-76, Gly-108, and 127 to 132; that span reads FSRMTF.

This sequence belongs to the RNA methyltransferase RlmH family. In terms of assembly, homodimer.

The protein localises to the cytoplasm. It carries out the reaction pseudouridine(1915) in 23S rRNA + S-adenosyl-L-methionine = N(3)-methylpseudouridine(1915) in 23S rRNA + S-adenosyl-L-homocysteine + H(+). In terms of biological role, specifically methylates the pseudouridine at position 1915 (m3Psi1915) in 23S rRNA. In Bacillus pumilus (strain SAFR-032), this protein is Ribosomal RNA large subunit methyltransferase H.